Here is a 2036-residue protein sequence, read N- to C-terminus: MQNDEEPAAAAGTSGLSNGESLRSPPAPAPRRPKPGILRLDIGKPRRSSGGSVDFRCVGSSSSNGNTSNVATGANSENNSGVTSPHQLSVTWAPPCDLDRGGWQMQSSADAKREFYKGQRGRRAASQEDHRSYELNDFPLQNQSSDAESCHQEPHFAHQRSPGIGFDEDGGGGDIDDEESYTISVSAIMQRRASVRGYRGKRGSRSSRRASSPMDHVLDSVERRRSSVYTTSSEEGTNQESTQEQIFENIRLHKEVIQSVKLQPWPIRKKLKLVRQAKTYVARHEGALQERFAMSRSTRDLWARFKILMAARWRHWKRETASFLTVLIPWELRIKEIESHFGSGVASYFTFLRWLMWVNIMIAIPLVAFVIGPEYFATKHGETDPRKRMSDPEARVAGNLFTFWEFEGYLKYSPMFYGYYSSTSGISTSGYKLPLAYFLTAVLVYIYSFVATLRKMAENSRNSKLSSKDDECVFSWKLFTGWDFMIGHAETAHNRIASVVVGFKEALLEEAEKKKDNRNWRVILQRILVNILVMGLLGLSGATVVLLVNHSEDLAKHDNWLSRNAVNVTMTLLSFFLPMIFEALGLFENWHPRQQLRLQLARIMILNMLNLYSLMFSFIYKINSKEKPLQMLKLENETNTMELKNLLSSIEALRAMTPTTSLYGESTSDGLFDDSTSTATWGEDGGGLFSTTAAAALISTTVQRLKCYNMTVKCSKLRRNIISGKHLATTLMVLNLTTPAMVPPTLPTTLPTTFPTTLPTTLPTTLPTALPTTLPTTLPTTLPSTLATTTATTSSIWSTTEETSPTTTTTSPWTTLPPSTTTTEATTTTERATTTTEATSTTTLKITTAEINSTLSDTTKPLGKSIDTEIPNSTTNSATLSTIPATLNTTNLPLNSTTKLTTTTSTEKPQGEDNFIYTTGEDEGSYDYGSDSTSDAPDNNSYSDITDYSSEPSEIEDFDEQESTDQADDPLAKVLEQLDENETKGRRKRALAESPFFTSKYSRRHRNESAVSAGQPRETTESVNATPSRWPFNWASFRQTTPRTTTTRRVPSGILTKEEWERLRRLRGRITTTTSTSTTSTTTRRPRWRYRTTTTELTSTTEEESSTTESSTDSSSPGSTTNAFDSSSSTTEEDEYTTTEGSENRPYYVGYVDISEMGSTIYYDGDSEFLEECVITICPKGDDFFGSTTESPDSTTQSSDSKQLTTVKLTPLERKQKRLKEVQLAIKQIQTNLTTMCWETSLGQELSKVIVFDGLMSIVAPLCIDFLRALFVRYVNQNWCWDMEKTFPQYGDFKIAENILTLINNQGQVWMGIFFSPGLVLINLVKLMIMMYFRSWIVLTCNVPHEVVFKASKSNNFYLSLLLTMLFLCVLPVGYAIVWLRPSWHCGPFSEYNRIAEFITNTTRNALPKQLHEPLDYLTSSSTVIPLLLLLILIIYYLVSLTGALREANQDLRTQLQKEREEERKKIFKVPEVKQAEPTATTLTNRWRKVLEASSPVTPTQPPDFDTEEYKNQARKELISRIMKKALRKGSATSDEDSFVRRDDDDTDTEHQDSLPHDEEAKDKRFGLSRLQQIRRTRKPSLVDIVQIAKQERARAGSIVAGTSSSGTGNFPIKETHPKSRFKVEKHERKDRGSMKDKKDTRHRQSPQQQQQPPPYESPKDNEHDPDTNSRIVSASLLRRHKEQAEGEEPPTTPDAPQTPNSPVEPVEQALEESTPETPTLAKSKFHIVDEKKPPPHEVEDKPLPTPKESGSGGGSLGKFKFRKHKFKSNNVAAVKPEPEVFKFDERSVERSSDVPATHAAEYLNNEPSGTEEQDRSLPSPTPSQGQGHHQRQLSVLSRQGRKKIGNLLALVREAVNLKKDDVEQAGSDESPGPTTPTYLAYTPPPPPSVLSSVSSSTALEMPPTPEPESPTPSAPLHFGSSTSSRAPSKPPKPPMVPASATAPTATMDDLEELDTAGPITFPRRSDSHRRRTMRQDSQSSIWSDNIPTITISTTGSDECIVDAAAPQNGLPDPRSASPEPTVNIIRIDIENEHEK.

Disordered regions lie at residues 1–178 (MQND…IDDE) and 194–243 (SVRG…ESTQ). Topologically, residues 1-353 (MQNDEEPAAA…GVASYFTFLR (353 aa)) are cytoplasmic. Residues 58-73 (VGSSSSNGNTSNVATG) are compositionally biased toward low complexity. Positions 74–90 (ANSENNSGVTSPHQLSV) are enriched in polar residues. The segment covering 125-134 (ASQEDHRSYE) has biased composition (basic and acidic residues). Over residues 166 to 178 (FDEDGGGGDIDDE) the composition is skewed to acidic residues. Basic residues predominate over residues 198-208 (YRGKRGSRSSR). Over residues 216–225 (HVLDSVERRR) the composition is skewed to basic and acidic residues. The segment covering 227 to 243 (SVYTTSSEEGTNQESTQ) has biased composition (polar residues). The helical transmembrane segment at 354–374 (WLMWVNIMIAIPLVAFVIGPE) threads the bilayer. At 375-395 (YFATKHGETDPRKRMSDPEAR) the chain is on the extracellular side. The helical transmembrane segment at 396–418 (VAGNLFTFWEFEGYLKYSPMFYG) threads the bilayer. Topologically, residues 419–432 (YYSSTSGISTSGYK) are cytoplasmic. A helical transmembrane segment spans residues 433–453 (LPLAYFLTAVLVYIYSFVATL). Topologically, residues 454–526 (RKMAENSRNS…NRNWRVILQR (73 aa)) are extracellular. A helical membrane pass occupies residues 527–547 (ILVNILVMGLLGLSGATVVLL). The Cytoplasmic segment spans residues 548-567 (VNHSEDLAKHDNWLSRNAVN). A helical transmembrane segment spans residues 568-588 (VTMTLLSFFLPMIFEALGLFE). At 589 to 599 (NWHPRQQLRLQ) the chain is on the extracellular side. Residues 600–620 (LARIMILNMLNLYSLMFSFIY) traverse the membrane as a helical segment. Residues 621–1308 (KINSKEKPLQ…ILTLINNQGQ (688 aa)) are Cytoplasmic-facing. 5 disordered regions span residues 789 to 839 (TTAT…TEAT), 860 to 967 (KPLG…TDQA), 996 to 1027 (FFTSKYSRRHRNESAVSAGQPRETTESVNATP), 1066 to 1143 (LRGR…EGSE), and 1186 to 1205 (GSTTESPDSTTQSSDSKQLT). A compositionally biased stretch (polar residues) spans 870 to 885 (IPNSTTNSATLSTIPA). The span at 886–906 (TLNTTNLPLNSTTKLTTTTST) shows a compositional bias: low complexity. Positions 933 to 952 (TSDAPDNNSYSDITDYSSEP) are enriched in polar residues. Residues 953 to 967 (SEIEDFDEQESTDQA) show a composition bias toward acidic residues. Composition is skewed to low complexity over residues 1069–1083 (RITTTTSTSTTSTTT), 1091–1100 (RTTTTELTST), and 1107–1130 (TTESSTDSSSPGSTTNAFDSSSST). A helical transmembrane segment spans residues 1309–1329 (VWMGIFFSPGLVLINLVKLMI). Over 1330-1358 (MMYFRSWIVLTCNVPHEVVFKASKSNNFY) the chain is Extracellular. The helical transmembrane segment at 1359–1379 (LSLLLTMLFLCVLPVGYAIVW) threads the bilayer. Topologically, residues 1380 to 1423 (LRPSWHCGPFSEYNRIAEFITNTTRNALPKQLHEPLDYLTSSST) are cytoplasmic. A helical membrane pass occupies residues 1424–1444 (VIPLLLLLILIIYYLVSLTGA). The Extracellular portion of the chain corresponds to 1445–2036 (LREANQDLRT…RIDIENEHEK (592 aa)). 3 disordered regions span residues 1527-1572 (LRKG…SRLQ), 1592-1841 (ERAR…SRQG), and 1859-1990 (KKDD…IPTI). 5 stretches are compositionally biased toward basic and acidic residues: residues 1538-1566 (SFVRRDDDDTDTEHQDSLPHDEEAKDKRF), 1614-1640 (KETHPKSRFKVEKHERKDRGSMKDKKD), 1658-1668 (SPKDNEHDPDT), 1727-1743 (HIVDEKKPPPHEVEDKP), and 1777-1793 (PEPEVFKFDERSVERSS). The segment covering 1806 to 1838 (NEPSGTEEQDRSLPSPTPSQGQGHHQRQLSVLS) has biased composition (polar residues). The segment covering 1890-1899 (VLSSVSSSTA) has biased composition (low complexity). The segment covering 1903–1914 (PPTPEPESPTPS) has biased composition (pro residues). A compositionally biased stretch (polar residues) spans 1976 to 1990 (QDSQSSIWSDNIPTI).

It belongs to the TMC family. As to expression, expressed in multi-dendritic neurons of the labellum (md-L), which extend elaborate dendritic arbors innervating the bases of taste hairs (at protein level). In larvae, expressed in class I and class II dendritic arborization (da) neurons and bipolar dendrite (bd) neurons (at protein level). In adults, expressed in various sensory neurons including those in the mouth parts, olfactory neurons in the antenna, wing bristle neurons, haltere neurons, arista neurons, and many other sensory neurons, including a subset of chordotonal (Cho) neurons. Expressed in md-L axon terminals, including those that project into the subesophageal zone (SEZ). Also expressed in a small number of local neurons in the adult ventral nerve cord (VNC), and projections extending from a few neurons in the legs or wing hinges. In the adult mouth, expressed in a few multi-dendritic neurons of the ventral cibarial sensory organ (VCSO); the multiple elaborate dendritic branches form a brush-like structure that faces the luminal side of the food-passing tunnel. Also expressed in the oviduct and uterus of adult females.

It is found in the cell membrane. The protein resides in the cell projection. Its subcellular location is the dendrite. In terms of biological role, probable ion channel. Component of mechanosensitive neurons that participates in proprioception, sensing food texture, and directing egg-laying site selection (oviposition). Component of multi-dendritic neurons of the labellum (md-L) where it is required for sensing the hardness and viscosity of their food, enabling them to behaviorally discriminate their preferred softness and smoothness from harder and stickier food options. Required as part of oviposition site selection process to relay mechanosensory and chemosensory information on the hardness and sweetness of potential egg-laying substrates, thus ensuring females select the most optimal site for their eggs survival. Females determine the softest substrate for their eggs first by making a coarse evaluation of substrate hardness using mechanosensitive channels nan and Piezo in the leg tarsal bristles, followed by a much finer assessment using nan, iav and Tmc mechanosensitive channels on the labellum. This protein is required to sense subtle differences in substrate stiffness (between 0.25% and 0.3% agarose), likely acting in the md-L neurons. Also required in neurons on the labellum, including the md-Ls, and possibly in the brain, to inhibit discrimination of egg-laying substrates of different hardness if the substrate contains sucrose. During oviposition evaluation, activation of sweet neurons by sucrose enhances the activity of the Tmc neurons resulting in females losing their softness preference in favor of egg-laying sites that contain sucrose. Acts in the larvae peripheral sensory neurons, to contribute to proprioception and sensory feedback for normal forward crawling behavior. Required for the normal activity of the proprioceptive sensory dendrites, ddaE which show preferential responses to forward locomotion, and ddaD which show preferential responses to backward locomotion. This is Transmembrane channel-like protein from Drosophila melanogaster (Fruit fly).